A 1084-amino-acid polypeptide reads, in one-letter code: Histone deacetylase 4 (1084 aa).

Residues 67-177 (REQQLQQELL…STEVKMKLQE (111 aa)) are a coiled coil. The interval 118-313 (MLAMKHQQEL…NNSSGSVSAE (196 aa)) is interaction with MEF2A. The segment covering 133 to 163 (KLERHRQEQELEKQHREQKLQQLKNKEKGKE) has biased composition (basic and acidic residues). Disordered stretches follow at residues 133–166 (KLER…ESAV), 206–226 (TQHS…TSYN), and 240–315 (PLRK…AENG). Phosphoserine is present on Ser210. Ser246 is modified (phosphoserine; by CaMK4 and SIK1). Residues 259-274 (KVAERRSSPLLRRKDG) are compositionally biased toward basic and acidic residues. Low complexity predominate over residues 290 to 312 (SACSSAPGSGPSSPNNSSGSVSA). Positions 349–354 (PSLPNI) match the PxLPxI/L motif; mediates interaction with ANKRA2 and 14-3-3 proteins motif. A Phosphoserine modification is found at Ser350. Ser467 carries the phosphoserine; by CaMK4 and SIK1 modification. Disordered stretches follow at residues 509-531 (PKPS…ELRE), 548-585 (KEAH…QPSE), and 626-646 (PLSR…VQEP). Over residues 516–531 (RQPESHPEETEEELRE) the composition is skewed to basic and acidic residues. Lys559 is covalently cross-linked (Glycyl lysine isopeptide (Lys-Gly) (interchain with G-Cter in SUMO)). Ser565 is modified (phosphoserine). Residues 629–641 (RAQSSPASATFPV) are compositionally biased toward polar residues. Residue Ser632 is modified to Phosphoserine; by CaMK4. Ser633 carries the phosphoserine modification. The interval 655–1084 (GLVYDTLMLK…EEPMEEEPPL (430 aa)) is histone deacetylase. 4 residues coordinate Zn(2+): Cys667, Cys669, His675, and Cys751. His803 is an active-site residue. Positions 1051–1084 (EEAETVTAMASLSVGVKPAEKRPDEEPMEEEPPL) match the Nuclear export signal motif. The disordered stretch occupies residues 1061 to 1084 (SLSVGVKPAEKRPDEEPMEEEPPL).

The protein belongs to the histone deacetylase family. HD type 2 subfamily. In terms of assembly, homodimer. Homodimerization via its N-terminal domain. Interacts with MEF2A. Interacts with MEF2C and MEF2D. Interacts with AHRR. Interacts with NR2C1. Interacts with HDAC7. Interacts with a 14-3-3 chaperone proteins in a phosphorylation dependent manner. Interacts with 14-3-3 protein YWHAB. Interacts with BTBD14B. Interacts with KDM5B. Interacts with MYOCD. Interacts with MORC2. Interacts (via PxLPxI/L motif) with ANKRA2 (via ankyrin repeats). Interacts with CUL7 (as part of the 3M complex); negatively regulated by ANKRA2. Interacts with EP300 in the presence of TFAP2C. Interacts with HSPA1A and HSPA1B leading to their deacetylation at 'Lys-77'. Interacts with ZBTB7B; the interaction allows the recruitment of HDAC4 on CD8 loci for deacetylation and possible inhibition of CD8 genes expression. Interacts with DHX36. Interacts with SIK3; this interaction leads to HDAC4 retention in the cytoplasm. Interacts with ZNF638. Phosphorylated by CaMK4 at Ser-246, Ser-467 and Ser-632. Phosphorylation at other residues by CaMK2D is required for the interaction with 14-3-3. Phosphorylation at Ser-350, within the PxLPxI/L motif, impairs the binding of ANKRA2 but generates a high-affinity docking site for 14-3-3. Post-translationally, sumoylation on Lys-559 is promoted by the E3 SUMO-protein ligase RANBP2, and prevented by phosphorylation by CaMK4. Ubiquitous.

Its subcellular location is the nucleus. The protein localises to the cytoplasm. It carries out the reaction N(6)-acetyl-L-lysyl-[histone] + H2O = L-lysyl-[histone] + acetate. Its function is as follows. Responsible for the deacetylation of lysine residues on the N-terminal part of the core histones (H2A, H2B, H3 and H4). Histone deacetylation gives a tag for epigenetic repression and plays an important role in transcriptional regulation, cell cycle progression and developmental events. Histone deacetylases act via the formation of large multiprotein complexes. Involved in muscle maturation via its interaction with the myocyte enhancer factors such as MEF2A, MEF2C and MEF2D. Involved in the MTA1-mediated epigenetic regulation of ESR1 expression in breast cancer. Deacetylates HSPA1A and HSPA1B at 'Lys-77' leading to their preferential binding to co-chaperone STUB1. The sequence is that of Histone deacetylase 4 from Homo sapiens (Human).